Reading from the N-terminus, the 770-residue chain is Low-density lipoprotein receptor-related protein 3 (770 aa).

Positions 1–36 (MEKRAAAGLEGAPGARAQLAVVCLVNIFLTGRLSSA) are cleaved as a signal peptide. Over 37–496 (VPALAACSGK…HGCLAAVPRK (460 aa)) the chain is Extracellular. Intrachain disulfides connect Cys43–Cys72, Cys99–Cys120, Cys166–Cys178, Cys173–Cys191, Cys185–Cys200, Cys212–Cys227, Cys219–Cys240, Cys234–Cys249, and Cys254–Cys282. Residues 43-159 (CSGKLEQHTE…QGFRLSYIRG (117 aa)) form the CUB 1 domain. A glycan (N-linked (GlcNAc...) asparagine) is linked at Asn71. 2 LDL-receptor class A domains span residues 165–201 (SCQA…GNCS) and 211–250 (LCPG…AGCP). Asn199 is a glycosylation site (N-linked (GlcNAc...) asparagine). One can recognise a CUB 2 domain in the interval 254 to 365 (CGRRLGSFYG…HGFNATYQVK (112 aa)). Asn359 carries N-linked (GlcNAc...) asparagine glycosylation. LDL-receptor class A domains are found at residues 415–453 (ACPP…KNCF) and 454–490 (SCQP…HGCL). 6 disulfide bridges follow: Cys416/Cys430, Cys423/Cys443, Cys437/Cys452, Cys455/Cys467, Cys462/Cys480, and Cys474/Cys489. The helical transmembrane segment at 497-517 (VITAALIGSLVCGLLLVIALG) threads the bilayer. The Cytoplasmic segment spans residues 518-770 (CAFKLYSLRT…ASDDEALLVC (253 aa)). The disordered stretch occupies residues 635–770 (LGDGFLQPAP…ASDDEALLVC (136 aa)). Over residues 689–707 (RDPECRPVDKDRKVCREPL) the composition is skewed to basic and acidic residues. The span at 729-738 (QVSTASSTLG) shows a compositional bias: polar residues. The segment covering 761 to 770 (ASDDEALLVC) has biased composition (acidic residues).

Belongs to the LDLR family. Binds GGA1 and GGA2. In terms of tissue distribution, widely expressed. Highly expressed in skeletal muscle and ovary. Expressed at intermediate level in heart, brain, liver, pancreas, prostate and small intestine. Weakly expressed in testis, colon and leukocyte.

It localises to the membrane. Its subcellular location is the coated pit. Its function is as follows. Probable receptor, which may be involved in the internalization of lipophilic molecules and/or signal transduction. Its precise role is however unclear, since it does not bind to very low density lipoprotein (VLDL) or to LRPAP1 in vitro. This chain is Low-density lipoprotein receptor-related protein 3 (LRP3), found in Homo sapiens (Human).